Reading from the N-terminus, the 141-residue chain is Large ribosomal subunit protein uL11 (141 aa).

It belongs to the universal ribosomal protein uL11 family. Part of the ribosomal stalk of the 50S ribosomal subunit. Interacts with L10 and the large rRNA to form the base of the stalk. L10 forms an elongated spine to which L12 dimers bind in a sequential fashion forming a multimeric L10(L12)X complex. In terms of processing, one or more lysine residues are methylated.

Forms part of the ribosomal stalk which helps the ribosome interact with GTP-bound translation factors. The chain is Large ribosomal subunit protein uL11 from Clostridium tetani (strain Massachusetts / E88).